Reading from the N-terminus, the 433-residue chain is Phosphomethylpyrimidine synthase 1 (433 aa).

Residues methionine 95, tyrosine 124, histidine 163, 185–187 (SRG), 226–229 (NAMR), and glutamate 265 contribute to the substrate site. Histidine 269 contacts Zn(2+). Residue tyrosine 292 coordinates substrate. Histidine 333 provides a ligand contact to Zn(2+). [4Fe-4S] cluster-binding residues include cysteine 408, cysteine 411, and cysteine 415.

The protein belongs to the ThiC family. Requires [4Fe-4S] cluster as cofactor.

The catalysed reaction is 5-amino-1-(5-phospho-beta-D-ribosyl)imidazole + S-adenosyl-L-methionine = 4-amino-2-methyl-5-(phosphooxymethyl)pyrimidine + CO + 5'-deoxyadenosine + formate + L-methionine + 3 H(+). Its pathway is cofactor biosynthesis; thiamine diphosphate biosynthesis. Catalyzes the synthesis of the hydroxymethylpyrimidine phosphate (HMP-P) moiety of thiamine from aminoimidazole ribotide (AIR) in a radical S-adenosyl-L-methionine (SAM)-dependent reaction. The protein is Phosphomethylpyrimidine synthase 1 of Methanothermobacter thermautotrophicus (strain ATCC 29096 / DSM 1053 / JCM 10044 / NBRC 100330 / Delta H) (Methanobacterium thermoautotrophicum).